Consider the following 338-residue polypeptide: tRNA N6-adenosine threonylcarbamoyltransferase (338 aa).

Residues histidine 109 and histidine 113 each coordinate Fe cation. Substrate contacts are provided by residues 132–136 (AISGA), aspartate 165, glycine 178, and asparagine 277. Aspartate 302 is a binding site for Fe cation.

The protein belongs to the KAE1 / TsaD family. It depends on Fe(2+) as a cofactor.

It is found in the cytoplasm. It carries out the reaction L-threonylcarbamoyladenylate + adenosine(37) in tRNA = N(6)-L-threonylcarbamoyladenosine(37) in tRNA + AMP + H(+). In terms of biological role, required for the formation of a threonylcarbamoyl group on adenosine at position 37 (t(6)A37) in tRNAs that read codons beginning with adenine. Is involved in the transfer of the threonylcarbamoyl moiety of threonylcarbamoyl-AMP (TC-AMP) to the N6 group of A37, together with TsaE and TsaB. TsaD likely plays a direct catalytic role in this reaction. In Chlamydia trachomatis serovar L2b (strain UCH-1/proctitis), this protein is tRNA N6-adenosine threonylcarbamoyltransferase.